The sequence spans 229 residues: Cytidylate kinase (229 aa).

10–18 (GPAGSGKST) is an ATP binding site.

The protein belongs to the cytidylate kinase family. Type 1 subfamily.

The protein resides in the cytoplasm. The enzyme catalyses CMP + ATP = CDP + ADP. The catalysed reaction is dCMP + ATP = dCDP + ADP. The polypeptide is Cytidylate kinase (Leptospira interrogans serogroup Icterohaemorrhagiae serovar Lai (strain 56601)).